The chain runs to 291 residues: Nucleotide-binding protein LMHCC_0126 (291 aa).

ATP is bound at residue 13–20 (GMSGAGKT). 63–66 (DLRG) contributes to the GTP binding site.

This sequence belongs to the RapZ-like family.

In terms of biological role, displays ATPase and GTPase activities. In Listeria monocytogenes serotype 4a (strain HCC23), this protein is Nucleotide-binding protein LMHCC_0126.